We begin with the raw amino-acid sequence, 340 residues long: S-adenosylmethionine:tRNA ribosyltransferase-isomerase (340 aa).

It belongs to the QueA family. Monomer.

Its subcellular location is the cytoplasm. It catalyses the reaction 7-aminomethyl-7-carbaguanosine(34) in tRNA + S-adenosyl-L-methionine = epoxyqueuosine(34) in tRNA + adenine + L-methionine + 2 H(+). It functions in the pathway tRNA modification; tRNA-queuosine biosynthesis. Its function is as follows. Transfers and isomerizes the ribose moiety from AdoMet to the 7-aminomethyl group of 7-deazaguanine (preQ1-tRNA) to give epoxyqueuosine (oQ-tRNA). This is S-adenosylmethionine:tRNA ribosyltransferase-isomerase from Vesicomyosocius okutanii subsp. Calyptogena okutanii (strain HA).